The chain runs to 129 residues: Sulfurtransferase TusD (129 aa).

Cys-79 serves as the catalytic Cysteine persulfide intermediate.

Belongs to the DsrE/TusD family. In terms of assembly, heterohexamer, formed by a dimer of trimers. The hexameric TusBCD complex contains 2 copies each of TusB, TusC and TusD. The TusBCD complex interacts with TusE.

Its subcellular location is the cytoplasm. Functionally, part of a sulfur-relay system required for 2-thiolation of 5-methylaminomethyl-2-thiouridine (mnm(5)s(2)U) at tRNA wobble positions. Accepts sulfur from TusA and transfers it in turn to TusE. This is Sulfurtransferase TusD from Pectobacterium carotovorum subsp. carotovorum (strain PC1).